The primary structure comprises 335 residues: MSLDIAQIALHQLIKRDEQTLEMVLRDSLLSTNAAVEEMMAELHRVYSAKSKAYGLFNEQSELADALRACRKGDEDFLSFSRAATGRLRDELAKYPFAEGGIVLFCQYRYLAVDYLLISVLNSCNSMRVNEQLDISTTHYLDINHADIVARIDLTEWETNPESTRYLTFLKGRVGRKVSDFFMDFLAASEGLDTKAQNRGLLKAVDEYCDEAQLDKNERQNYRQQVYSYCNEQLQSGEEIELASLSQELPPLGEKTFQQFSTEQGYELEESFPADRGTLRQLTKFAGSGGGISLNFDALLLGERIFWDPATDTLTIKGTPPNLRDQLQRRTSSSK.

It belongs to the YejK family.

Its subcellular location is the cytoplasm. It is found in the nucleoid. In Pectobacterium carotovorum subsp. carotovorum (strain PC1), this protein is Nucleoid-associated protein PC1_1634.